A 326-amino-acid chain; its full sequence is Cytosolic sulfotransferase 7 (326 aa).

A 3'-phosphoadenylyl sulfate-binding site is contributed by 72 to 77; it reads KSGTTW. The active-site Proton acceptor is the His-138. Residues Arg-160, Ser-168, Tyr-226, and 292–294 each bind 3'-phosphoadenylyl sulfate; that span reads RKG.

Belongs to the sulfotransferase 1 family.

It localises to the cytoplasm. Functionally, sulfotransferase that utilizes 3'-phospho-5'-adenylyl sulfate (PAPS) as sulfonate donor. The polypeptide is Cytosolic sulfotransferase 7 (SOT7) (Arabidopsis thaliana (Mouse-ear cress)).